A 153-amino-acid polypeptide reads, in one-letter code: Putative adenylate kinase (153 aa).

G12, G14, K15, S16, and T17 together coordinate ATP. Residues 31–47 (EGNELAKEYGCLFDEEV) form an NMP region. An LID region spans residues 94–104 (ARGYSEEKIQE). R95 serves as a coordination point for ATP.

The protein belongs to the adenylate kinase family. AK6 subfamily. As to quaternary structure, interacts with uS11. Not a structural component of 40S pre-ribosomes, but transiently interacts with them by binding to uS11.

It carries out the reaction AMP + ATP = 2 ADP. It catalyses the reaction ATP + H2O = ADP + phosphate + H(+). Its function is as follows. Broad-specificity nucleoside monophosphate (NMP) kinase that catalyzes the reversible transfer of the terminal phosphate group between nucleoside triphosphates and monophosphates. Also has ATPase activity. Involved in the late maturation steps of the 30S ribosomal particles, specifically 16S rRNA maturation. While NMP activity is not required for ribosome maturation, ATPase activity is. Associates transiently with small ribosomal subunit protein uS11. ATP hydrolysis breaks the interaction with uS11. May temporarily remove uS11 from the ribosome to enable a conformational change of the ribosomal RNA that is needed for the final maturation step of the small ribosomal subunit. This chain is Putative adenylate kinase, found in Thermoplasma volcanium (strain ATCC 51530 / DSM 4299 / JCM 9571 / NBRC 15438 / GSS1).